The sequence spans 199 residues: Female-specific protein transformer (199 aa).

Disordered stretches follow at residues 1–121 (MDAD…RTPR) and 178–199 (YRAG…QAPN). Residues 20–37 (REKMPYFADEVRERDRVR) are compositionally biased toward basic and acidic residues. Basic residues-rich tracts occupy residues 56-69 (RRSR…RSRT), 77-92 (CQRR…RSGS), and 102-119 (SRRR…RSRT).

The protein localises to the nucleus speckle. Member of the regulatory pathway controlling female somatic sexual differentiation, regulated by Sxl. Activates dsx female-specific splicing by promoting the formation of a splicing enhancer complex which consists of tra, tra2 and sr proteins. In Drosophila virilis (Fruit fly), this protein is Female-specific protein transformer (tra).